Here is a 327-residue protein sequence, read N- to C-terminus: Phenylalanine--tRNA ligase alpha subunit (327 aa).

Residue glutamate 252 participates in Mg(2+) binding.

Belongs to the class-II aminoacyl-tRNA synthetase family. Phe-tRNA synthetase alpha subunit type 1 subfamily. Tetramer of two alpha and two beta subunits. Requires Mg(2+) as cofactor.

The protein resides in the cytoplasm. It catalyses the reaction tRNA(Phe) + L-phenylalanine + ATP = L-phenylalanyl-tRNA(Phe) + AMP + diphosphate + H(+). The protein is Phenylalanine--tRNA ligase alpha subunit of Shigella boydii serotype 18 (strain CDC 3083-94 / BS512).